Here is a 177-residue protein sequence, read N- to C-terminus: Prorelaxin (177 aa).

A signal peptide spans 1–25 (MLRWFLSHLLGVWLLLSQLPREIPA). Cystine bridges form between Cys34–Cys164, Cys46–Cys177, and Cys163–Cys168. Positions 63 to 149 (QISEPLAEVV…KSLSKLDKHP (87 aa)) are cleaved as a propeptide — connecting peptide.

This sequence belongs to the insulin family. In terms of assembly, heterodimer of a B chain and an A chain linked by two disulfide bonds. As to expression, placenta; syncytiotrophoblast.

It localises to the secreted. Functionally, relaxin is an ovarian hormone that acts with estrogen to produce dilatation of the birth canal in many mammals. This is Prorelaxin (RLN) from Canis lupus familiaris (Dog).